The sequence spans 123 residues: Small ribosomal subunit protein uS12 (123 aa).

The residue at position 89 (aspartate 89) is a 3-methylthioaspartic acid.

This sequence belongs to the universal ribosomal protein uS12 family. Part of the 30S ribosomal subunit. Contacts proteins S8 and S17. May interact with IF1 in the 30S initiation complex.

In terms of biological role, with S4 and S5 plays an important role in translational accuracy. Its function is as follows. Interacts with and stabilizes bases of the 16S rRNA that are involved in tRNA selection in the A site and with the mRNA backbone. Located at the interface of the 30S and 50S subunits, it traverses the body of the 30S subunit contacting proteins on the other side and probably holding the rRNA structure together. The combined cluster of proteins S8, S12 and S17 appears to hold together the shoulder and platform of the 30S subunit. The chain is Small ribosomal subunit protein uS12 from Bradyrhizobium diazoefficiens (strain JCM 10833 / BCRC 13528 / IAM 13628 / NBRC 14792 / USDA 110).